The primary structure comprises 208 residues: GTP-binding protein YPTM1 (208 aa).

Residues 15 to 23 (GDSSVGKSC), 33 to 40 (YVDSYIST), 63 to 67 (DTAGQ), 121 to 124 (NKCD), and 151 to 153 (SAK) contribute to the GTP site. An Effector region motif is present at residues 37–45 (YISTIGVDF). A disordered region spans residues 189-208 (QMKGRPIQQEQQKSSRCCST). The segment covering 196–208 (QQEQQKSSRCCST) has biased composition (polar residues). 2 S-geranylgeranyl cysteine lipidation sites follow: cysteine 205 and cysteine 206.

The protein belongs to the small GTPase superfamily. Rab family. In terms of tissue distribution, low levels in coleoptiles.

The protein localises to the cell membrane. In terms of biological role, protein transport. Probably involved in vesicular traffic. The polypeptide is GTP-binding protein YPTM1 (YPTM1) (Zea mays (Maize)).